The primary structure comprises 297 residues: UTP--glucose-1-phosphate uridylyltransferase (297 aa).

Belongs to the UDPGP type 2 family.

It catalyses the reaction alpha-D-glucose 1-phosphate + UTP + H(+) = UDP-alpha-D-glucose + diphosphate. The protein operates within carbohydrate metabolism; nucleotide-sugar metabolism. It participates in bacterial outer membrane biogenesis; lipopolysaccharide biosynthesis. In terms of biological role, may play a role in stationary phase survival. The chain is UTP--glucose-1-phosphate uridylyltransferase (galF) from Salmonella typhimurium (strain LT2 / SGSC1412 / ATCC 700720).